The primary structure comprises 441 residues: Glutamate--tRNA ligase 1 (441 aa).

The 'HIGH' region signature appears at 7–17 (PSPTGYMHIGN). The 'KMSKS' region motif lies at 236–240 (KMSKR). Residue lysine 239 coordinates ATP.

This sequence belongs to the class-I aminoacyl-tRNA synthetase family. Glutamate--tRNA ligase type 1 subfamily. Monomer.

The protein localises to the cytoplasm. The catalysed reaction is tRNA(Glu) + L-glutamate + ATP = L-glutamyl-tRNA(Glu) + AMP + diphosphate. Functionally, catalyzes the attachment of glutamate to tRNA(Glu) in a two-step reaction: glutamate is first activated by ATP to form Glu-AMP and then transferred to the acceptor end of tRNA(Glu). This Anaplasma marginale (strain St. Maries) protein is Glutamate--tRNA ligase 1.